A 495-amino-acid chain; its full sequence is Leucine aminopeptidase 2 (495 aa).

A signal peptide spans 1–21 (MKTQLLSLGVALTAISQGVIA). The PA domain occupies 124–218 (PPADKITAEL…ADGKNLASLV (95 aa)). Asn-142 and Asn-235 each carry an N-linked (GlcNAc...) asparagine glycan. Zn(2+) contacts are provided by His-259 and Asp-271. N-linked (GlcNAc...) asparagine glycosylation is present at Asn-272. Residue Glu-303 is the Proton acceptor of the active site. Zn(2+) is bound by residues Glu-304 and Asp-332. Asn-352 carries N-linked (GlcNAc...) asparagine glycosylation. Position 430 (His-430) interacts with Zn(2+). The interval 464 to 495 (GFPTRPKTGKRDVSPRGQSMPGGGCGHHSVFM) is disordered.

Belongs to the peptidase M28 family. M28A subfamily. In terms of assembly, monomer. Requires Zn(2+) as cofactor.

The protein localises to the secreted. Functionally, extracellular aminopeptidase that releases a wide variety of amino acids from natural peptides and contributes to pathogenicity. The sequence is that of Leucine aminopeptidase 2 (LAP2) from Arthroderma otae (strain ATCC MYA-4605 / CBS 113480) (Microsporum canis).